Consider the following 739-residue polypeptide: UPF0313 protein YgiQ (739 aa).

The Radical SAM core domain maps to 372–650; it reads AYEMIRFSVN…KALLRYHDPA (279 aa). The [4Fe-4S] cluster site is built by C386, C390, and C393. A disordered region spans residues 685-739; that stretch reads REARRQNRNTRPALTKHTPMATQRQTPATAKKASSTQSRPVNAGAKKRPKAAVGR. Polar residues predominate over residues 704-724; sequence MATQRQTPATAKKASSTQSRP. Basic residues predominate over residues 729 to 739; sequence AKKRPKAAVGR.

The protein belongs to the UPF0313 family. [4Fe-4S] cluster serves as cofactor.

In Escherichia coli (strain K12), this protein is UPF0313 protein YgiQ (ygiQ).